Reading from the N-terminus, the 343-residue chain is Twinfilin (343 aa).

ADF-H domains follow at residues 4–139 (QTGI…KHKI) and 177–312 (GINC…EELH). Residues 317–343 (NLRPQFSKPKGPPSRGAKRLTKPQAVE) are disordered.

The protein belongs to the actin-binding proteins ADF family. Twinfilin subfamily. Interacts with G-actin; ADP-actin form.

It is found in the cytoplasm. The protein localises to the cytoskeleton. The protein resides in the cell cortex. In terms of biological role, actin-binding protein involved in motile and morphological processes. Inhibits actin polymerization, likely by sequestering G-actin. This is Twinfilin (twf) from Aedes aegypti (Yellowfever mosquito).